The primary structure comprises 339 residues: Homeobox protein DBX2 (339 aa).

A DNA-binding region (homeobox) is located at residues 186–245 (GILRRAVFSEDQRKALEKMFQKQKYISKTDRKKLAINLGLKESQVKIWFQNRRMKWRNSK). A disordered region spans residues 282 to 318 (VPQQHSSPRWRENSPEPSERLIQESSGAPPPEANSLQ). Residues 290-303 (RWRENSPEPSERLI) are compositionally biased toward basic and acidic residues.

The protein belongs to the H2.0 homeobox family.

The protein localises to the nucleus. This Homo sapiens (Human) protein is Homeobox protein DBX2 (DBX2).